Here is a 301-residue protein sequence, read N- to C-terminus: Protoheme IX farnesyltransferase (301 aa).

Helical transmembrane passes span 20–42 (FTELVKIGIVNSNTITAFTGMWL), 55–75 (VDVIFFTIVGSALIVAASGAF), 105–125 (ALMVALVLGVVGTIMLFMTTW), 126–146 (QAGVLGVIGVFLYVVVYSLYA), 150–172 (LVSNTVIGSFSGAVPPLIGWFAV), 176–198 (FSIVPIMLFLVMFCWQPPHFYAI), 227–247 (MFFWVILLTILPFFMFDLGIV), 249–269 (VILATLLNIGWLALSIYGFKM), and 280–300 (FVYSLNYMTILFVAMVVISIF).

It belongs to the UbiA prenyltransferase family. Protoheme IX farnesyltransferase subfamily. As to quaternary structure, interacts with CtaA.

The protein resides in the cell membrane. The enzyme catalyses heme b + (2E,6E)-farnesyl diphosphate + H2O = Fe(II)-heme o + diphosphate. It functions in the pathway porphyrin-containing compound metabolism; heme O biosynthesis; heme O from protoheme: step 1/1. Its function is as follows. Converts heme B (protoheme IX) to heme O by substitution of the vinyl group on carbon 2 of heme B porphyrin ring with a hydroxyethyl farnesyl side group. This is Protoheme IX farnesyltransferase from Listeria monocytogenes serovar 1/2a (strain ATCC BAA-679 / EGD-e).